Reading from the N-terminus, the 629-residue chain is Keratin, type II cytoskeletal 3 (629 aa).

A head region spans residues 1–182; it reads MNRQVCKTSG…DPQIGQVRAQ (182 aa). Residues S13 and S62 each carry the phosphoserine modification. The coil 1A stretch occupies residues 183 to 218; it reads EREQIKTLNNKFASFIDKVRFLEQQNKVLETKWELL. Residues 183-498 enclose the IF rod domain; the sequence is EREQIKTLNN…KLLEGEESRM (316 aa). Residues 219–239 form a linker 1 region; sequence QRQGPNSVTGTNNLEPLFENR. A coil 1B region spans residues 240-331; the sequence is INYLRSYLDS…TLYDAELSQM (92 aa). At K281 the chain carries N6,N6-dimethyllysine. Positions 332 to 355 are linker 12; sequence QSHVSDMSVVLSMDNNRSLDLDSI. Position 349 is a phosphoserine (S349). The coil 2 stretch occupies residues 356–494; sequence IAEVRAQYED…ATYRKLLEGE (139 aa). Positions 495 to 629 are tail; that stretch reads ESRMSGECQS…FSQSSQRYSR (135 aa). The interval 603-629 is disordered; sequence SGGGFSSGSSSRGSSVKFSQSSQRYSR. The span at 618–629 shows a compositional bias: polar residues; that stretch reads VKFSQSSQRYSR.

Belongs to the intermediate filament family. As to quaternary structure, heterotetramer of two type I and two type II keratins. Keratin-3 associates with keratin-12. As to expression, cornea specific. Expressed in the basal cells of corneal epithelium and stroma. Also expressed in esophageal epithelium.

This Oryctolagus cuniculus (Rabbit) protein is Keratin, type II cytoskeletal 3 (KRT3).